Reading from the N-terminus, the 199-residue chain is Protein Thf1 (199 aa).

The stretch at 167–198 (QYSRVEKDISMYKSNIEKMKQALEIIALNLKT) forms a coiled coil.

The protein belongs to the THF1 family.

In terms of biological role, may be involved in photosynthetic membrane biogenesis. The sequence is that of Protein Thf1 from Prochlorococcus marinus (strain NATL1A).